Reading from the N-terminus, the 100-residue chain is Co-chaperonin GroES (100 aa).

The protein belongs to the GroES chaperonin family. Heptamer of 7 subunits arranged in a ring. Interacts with the chaperonin GroEL.

It localises to the cytoplasm. In terms of biological role, together with the chaperonin GroEL, plays an essential role in assisting protein folding. The GroEL-GroES system forms a nano-cage that allows encapsulation of the non-native substrate proteins and provides a physical environment optimized to promote and accelerate protein folding. GroES binds to the apical surface of the GroEL ring, thereby capping the opening of the GroEL channel. This is Co-chaperonin GroES from Nocardia farcinica (strain IFM 10152).